The chain runs to 562 residues: MERVWWKEAVVYQIYPRSFYDSNGDGIGDIRGIIAKLDYLKELGVDVVWLSPVYKSPNDDNGYDISDYRDIMDEFGTMADWKTMLEEMHKRGIKLVMDLVVNHTSDEHPWFIESRKSKDNPYRDYYIWRPGKNGKEPNNWESVFSGSAWEYDEMTGEYYLHLFSKKQPDLNWENPKVRREVYEMMKFWLDKGVDGFRMDVINMISKVPELPDGEPQSGKKYASGSRYYMNGPRVHEFLQEMNREVLSKYDIMTVGETPGVTPKEGILYTDPSRRELNMVFQFEHMDLDSGPGGKWDIRPWSLADLKKTMTKWQKELEGKGWNSLYLNNHDQPRAVSRFGDDGKYRVESAKMLATFLHMMQGTPYIYQGEEIGMTNVRFPSIEDYRDIETLNMYKERVEEYGEDPQEVMEKIYYKGRDNARTPMQWDDSENAGFTAGTPWIPVNPNYKEINVKAALEDPNSVFHYYKKLIQLRKQHDIIVYGTYDLILEDDPYIYRYTRTLGNEQLIVITNFSEKTPVFRLPDHIIYKTKELLISNYDVDEAEELKEIRLRPWEARVYKIRLP.

Positions 21, 23, 25, and 29 each coordinate Ca(2+). The Nucleophile role is filled by Asp-199. Glu-256 serves as the catalytic Proton donor.

This sequence belongs to the glycosyl hydrolase 13 family.

It localises to the cytoplasm. The enzyme catalyses Hydrolysis of (1-&gt;6)-alpha-D-glucosidic linkages in some oligosaccharides produced from starch and glycogen by alpha-amylase, and in isomaltose.. The protein is Oligo-1,6-glucosidase (malL) of Parageobacillus thermoglucosidasius (Geobacillus thermoglucosidasius).